Reading from the N-terminus, the 275-residue chain is Ribosomal RNA small subunit methyltransferase A (275 aa).

Asparagine 19, leucine 21, glycine 46, glutamate 71, aspartate 94, and asparagine 117 together coordinate S-adenosyl-L-methionine.

The protein belongs to the class I-like SAM-binding methyltransferase superfamily. rRNA adenine N(6)-methyltransferase family. RsmA subfamily.

It localises to the cytoplasm. The enzyme catalyses adenosine(1518)/adenosine(1519) in 16S rRNA + 4 S-adenosyl-L-methionine = N(6)-dimethyladenosine(1518)/N(6)-dimethyladenosine(1519) in 16S rRNA + 4 S-adenosyl-L-homocysteine + 4 H(+). Specifically dimethylates two adjacent adenosines (A1518 and A1519) in the loop of a conserved hairpin near the 3'-end of 16S rRNA in the 30S particle. May play a critical role in biogenesis of 30S subunits. The protein is Ribosomal RNA small subunit methyltransferase A of Burkholderia lata (strain ATCC 17760 / DSM 23089 / LMG 22485 / NCIMB 9086 / R18194 / 383).